The chain runs to 417 residues: Probable medium-chain specific acyl-CoA dehydrogenase 10, mitochondrial (417 aa).

The transit peptide at 1–15 directs the protein to the mitochondrion; the sequence is MLSRIATSSLGLSRS. Residues 148 to 157 and 181 to 183 each bind FAD; these read YCVTEPGAGS and WIT. S157 contributes to the substrate binding site. Residue 268–271 coordinates substrate; sequence DMTR. Residues 306-307 and 364-368 each bind FAD; these read HQ and QIFGG. E391 serves as the catalytic Proton acceptor. G392 is a substrate binding site. 393 to 395 contacts FAD; sequence TSQ.

This sequence belongs to the acyl-CoA dehydrogenase family. Homotetramer. FAD is required as a cofactor. In terms of tissue distribution, expressed in the epidermis and intestine.

It localises to the mitochondrion matrix. The enzyme catalyses a medium-chain 2,3-saturated fatty acyl-CoA + oxidized [electron-transfer flavoprotein] + H(+) = a medium-chain (2E)-enoyl-CoA + reduced [electron-transfer flavoprotein]. Its pathway is lipid metabolism; mitochondrial fatty acid beta-oxidation. In terms of biological role, this enzyme is specific for acyl chain lengths of 4 to 16. In Caenorhabditis elegans, this protein is Probable medium-chain specific acyl-CoA dehydrogenase 10, mitochondrial (acdh-10).